The sequence spans 260 residues: Protein TONNEAU 1a (260 aa).

One can recognise a LisH domain in the interval 73–105 (SGRLLSALICEYLDWAQLNHTLIVYQPESNLPK). Disordered stretches follow at residues 147-224 (TQGM…EEVT) and 236-260 (DRKTRNLTSSWRNVRDGTNEEEGRD). Low complexity predominate over residues 161 to 175 (ESSSSLESRNPPRRS). Basic and acidic residues predominate over residues 248 to 260 (NVRDGTNEEEGRD).

As to quaternary structure, interacts with CEN1, LNG1/TRM2 and LNG2/TRM1 (via C-terminus).

The protein resides in the cytoplasm. It is found in the cytoskeleton. Involved in the control of the dynamic organization of the cortical cytoskeleton. May play a role in the organization of microtubule arrays at the centrosome through interaction with centrin 1 (CEN1). The chain is Protein TONNEAU 1a (TON1A) from Arabidopsis thaliana (Mouse-ear cress).